The following is a 218-amino-acid chain: Cell division protein SepF (218 aa).

The tract at residues 25–115 (DVAASTDNVI…IANRREQYQQ (91 aa)) is disordered. Over residues 29-43 (STDNVIPRSQQSVRA) the composition is skewed to polar residues. The segment covering 47-63 (PKQEPRNNHVQQDHQAR) has biased composition (basic and acidic residues). Positions 102 to 115 (STSSIANRREQYQQ) are enriched in polar residues.

The protein belongs to the SepF family. In terms of assembly, homodimer. Interacts with FtsZ.

It localises to the cytoplasm. Functionally, cell division protein that is part of the divisome complex and is recruited early to the Z-ring. Probably stimulates Z-ring formation, perhaps through the cross-linking of FtsZ protofilaments. Its function overlaps with FtsA. This Streptococcus pyogenes serotype M5 (strain Manfredo) protein is Cell division protein SepF.